The primary structure comprises 390 residues: Dual-specificity RNA methyltransferase RlmN (390 aa).

Catalysis depends on glutamate 110, which acts as the Proton acceptor. The region spanning 116-355 (EADRATLCVS…VIIRKTRGDD (240 aa)) is the Radical SAM core domain. A disulfide bridge connects residues cysteine 123 and cysteine 360. [4Fe-4S] cluster is bound by residues cysteine 130, cysteine 134, and cysteine 137. Residues 184-185 (GE), serine 216, 238-240 (SLH), and asparagine 317 contribute to the S-adenosyl-L-methionine site. The active-site S-methylcysteine intermediate is the cysteine 360.

The protein belongs to the radical SAM superfamily. RlmN family. The cofactor is [4Fe-4S] cluster.

The protein localises to the cytoplasm. It carries out the reaction adenosine(2503) in 23S rRNA + 2 reduced [2Fe-2S]-[ferredoxin] + 2 S-adenosyl-L-methionine = 2-methyladenosine(2503) in 23S rRNA + 5'-deoxyadenosine + L-methionine + 2 oxidized [2Fe-2S]-[ferredoxin] + S-adenosyl-L-homocysteine. The catalysed reaction is adenosine(37) in tRNA + 2 reduced [2Fe-2S]-[ferredoxin] + 2 S-adenosyl-L-methionine = 2-methyladenosine(37) in tRNA + 5'-deoxyadenosine + L-methionine + 2 oxidized [2Fe-2S]-[ferredoxin] + S-adenosyl-L-homocysteine. Functionally, specifically methylates position 2 of adenine 2503 in 23S rRNA and position 2 of adenine 37 in tRNAs. m2A2503 modification seems to play a crucial role in the proofreading step occurring at the peptidyl transferase center and thus would serve to optimize ribosomal fidelity. This is Dual-specificity RNA methyltransferase RlmN from Haemophilus influenzae (strain PittEE).